Here is a 1109-residue protein sequence, read N- to C-terminus: Receptor-like protein kinase (1109 aa).

The first 20 residues, 1-20 (MKVAVNTFLLFLCSTSSIYA), serve as a signal peptide directing secretion. The Extracellular segment spans residues 21–764 (AFALNSDGAA…GGLSTLGIAM (744 aa)). N-linked (GlcNAc...) asparagine glycans are attached at residues N50, N74, and N114. 6 LRR repeats span residues 69–92 (FVDT…SHLK), 93–115 (HLKK…LGNC), 117–140 (LLEH…GALQ), 141–162 (NLRN…SLLS), 165–187 (HLET…IGNM), and 189–209 (ELTT…SSLG). N-linked (GlcNAc...) asparagine glycans are attached at residues N144, N177, and N186. N-linked (GlcNAc...) asparagine glycosylation is present at N210. LRR repeat units follow at residues 213-236 (TLQE…NNLE), 237-258 (NLVY…DFVS), 261-284 (QIDT…GNCT), 309-331 (KLDT…LGKC), 333-355 (SMID…LGML), 357-378 (QLQY…SIWK), 381-404 (SLQS…TELK), 405-427 (QLVS…LGAN), 429-451 (SLEV…LCSQ), 453-476 (KLKR…GGCS), 477-499 (TLER…VEKQ), 500-523 (NLLF…GNLK), 524-546 (NVTA…LGSL), 548-569 (KLEH…ELSN), 572-595 (KLSE…GSLT), 596-618 (ELTK…LFQS), 620-642 (KLLN…GALQ), 643-666 (ALRS…GKLK), 667-689 (MLEE…STIQ), and 690-710 (SLTF…PSLT). N-linked (GlcNAc...) asparagine glycosylation is found at N245 and N282. 3 N-linked (GlcNAc...) asparagine glycosylation sites follow: N367, N391, and N427. N-linked (GlcNAc...) asparagine glycosylation is found at N510, N524, N553, and N584. Residues N648, N677, and N695 are each glycosylated (N-linked (GlcNAc...) asparagine). Residues 765–785 (IVLGALLFIICLFLFSAFLFL) traverse the membrane as a helical segment. Topologically, residues 786–1109 (HCKKSVQEIA…YSSSVRNKSK (324 aa)) are cytoplasmic. The region spanning 816–1096 (LNDKYVIGKG…DVVKQLTRWS (281 aa)) is the Protein kinase domain. Residues 822–830 (IGKGAHGTI) and K845 contribute to the ATP site. The LRR 27 repeat unit spans residues 827–850 (HGTIYKATLSPDKVYAVKKLVFTG). The Proton acceptor role is filled by D942. The stretch at 958–981 (ISDFGIAKLLDQSATSIPSNTVQG) is one LRR 28 repeat.

The protein belongs to the protein kinase superfamily. Ser/Thr protein kinase family. INRPK1 and INRPK1b are expressed in leaves, cotyledons, shoot tips and roots from induced and vegetative plants. The highest concentrations of INRPK1 are found in vegetative roots, and the lowest concentrations in vegetative cotyledons. INRPK1b is more abundant in roots than other tissues. INRPK1a is expressed in vegetative roots. INRPK1c is expressed in cotyledons.

Its subcellular location is the cell membrane. The protein localises to the secreted. It carries out the reaction L-seryl-[protein] + ATP = O-phospho-L-seryl-[protein] + ADP + H(+). The catalysed reaction is L-threonyl-[protein] + ATP = O-phospho-L-threonyl-[protein] + ADP + H(+). Functionally, possible role in short-day photoperiod floral induction. The protein is Receptor-like protein kinase (INRPK1) of Ipomoea nil (Japanese morning glory).